We begin with the raw amino-acid sequence, 158 residues long: uncharacterized protein (158 aa).

The next 2 helical transmembrane spans lie at 66-86 (LLII…PWIM) and 94-114 (FFSL…SLTI).

The protein resides in the membrane. This is an uncharacterized protein from Saccharomyces cerevisiae (strain ATCC 204508 / S288c) (Baker's yeast).